A 158-amino-acid polypeptide reads, in one-letter code: MAVSDLSHRFEGESVGRALELVGERWTLLILREAFFGVRRFGQLARNLGIPRPTLSSRLRMLVEVGLFDRVPYSSDPERHEYRLTEAGRDLFAAIVVLMQWGDEYLPRPEGPPIKLRHHTCGEHADPRLICTHCGEEITARNVTPEPGPGFKAKLASS.

An HTH hxlR-type domain is found at 13–110 (ESVGRALELV…WGDEYLPRPE (98 aa)).

This is an uncharacterized protein from Mycobacterium tuberculosis (strain ATCC 25618 / H37Rv).